We begin with the raw amino-acid sequence, 683 residues long: Amino acid transporter heavy chain SLC3A1 (683 aa).

Residues 1 to 10 show a composition bias toward basic and acidic residues; sequence MNEDKDKRDS. Residues 1-50 are disordered; it reads MNEDKDKRDSIQMSMKGCRTNNGFVQNEDIQEQDPDSRDTPQSNAVSIPA. Residues 1–86 lie on the Cytoplasmic side of the membrane; sequence MNEDKDKRDS…ARYRVPREIL (86 aa). The residue at position 10 (Ser10) is a Phosphoserine. The helical; Signal-anchor for type II membrane protein transmembrane segment at 87–107 threads the bilayer; sequence FWLTVVSVFLLIGATIAIIII. Over 108–683 the chain is Extracellular; sequence SPKCLDWWQA…SVLDLLYSSC (576 aa). Asn211 is a binding site for Ca(2+). N-linked (GlcNAc...) asparagine glycans are attached at residues Asn211, Asn238, and Asn258. A disulfide bridge links Cys239 with Cys270. Residues Asp281, Phe315, Leu316, and Glu318 each coordinate Ca(2+). N-linked (GlcNAc...) asparagine glycosylation occurs at Asn329. Position 383 is a phosphoserine (Ser383). 3 N-linked (GlcNAc...) asparagine glycosylation sites follow: Asn510, Asn520, and Asn574. 2 disulfide bridges follow: Cys568–Cys664 and Cys671–Cys683.

As to quaternary structure, disulfide-linked heterodimer composed of the catalytic light subunit SLC7A9 and the heavy subunit SLC3A1. The heterodimer is the minimal functional unit. Assembles in non-covalently linked heterotetramers (dimers of heterodimers) and higher order oligomers; the oligomerization is mediated by SLC3A1 likely to prevent degradation in the endoplasmic reticulum and facilitate heteromer trafficking to the plasma membrane. Disulfide-linked heterodimer composed of the catalytic light subunit SLC7A13 and the heavy subunit SLC3A1. As to expression, predominantly expressed in kidney and intestine. In kidney localized to the apical membrane of the proximal tubules.

The protein localises to the cell membrane. It is found in the apical cell membrane. Acts as a chaperone that facilitates biogenesis and trafficking of functional transporter heteromers to the plasma membrane. Associates with SLC7A9 to form a functional transporter complex that mediates the electrogenic exchange between cationic amino acids and neutral amino acids, with a stoichiometry of 1:1. SLC7A9-SLC3A1 transporter has system b(0,+)-like activity with high affinity for extracellular cationic amino acids and L-cystine and lower affinity for intracellular neutral amino acids. Substrate exchange is driven by high concentration of intracellular neutral amino acids and the intracellular reduction of L-cystine to L-cysteine. SLC7A9-SLC3A1 acts as a major transporter for reabsorption of L-cystine and dibasic amino acids across the brush border membrane in early proximal tubules. Associates with SLC7A13 to form a functional complex that transports anionic and neutral amino acids via exchange or facilitated diffusion. SLC7A13-SLC3A1 may act as a major transporter for L-cystine in late proximal tubules, ensuring its reabsorption from the luminal fluid in exchange for cytosolic L-glutamate or L-aspartate. This Rattus norvegicus (Rat) protein is Amino acid transporter heavy chain SLC3A1 (Slc3a1).